Here is a 567-residue protein sequence, read N- to C-terminus: Geranylgeranyl transferase type-2 subunit alpha (567 aa).

PFTA repeat units follow at residues 44 to 78 (LDES…QLET), 88 to 122 (LVKA…RLPE), 124 to 158 (NWAR…QAAV), 159 to 193 (APAE…QLHP), 207 to 241 (VLLR…RAEP), and 363 to 397 (VLQS…ALDP). Phosphoserine is present on Ser98. LRR repeat units follow at residues 442–463 (DVRV…EQLL), 464–486 (LVTH…AALR), 487–508 (CLEV…ANLP), 509–530 (RLRE…QTLA), and 534–555 (RLVF…RERL).

The protein belongs to the protein prenyltransferase subunit alpha family. In terms of assembly, heterotrimer composed of RABGGTA, RABGGTB and CHM; within this trimer, RABGGTA and RABGGTB form the catalytic component B, while CHM (component A) mediates peptide substrate binding. The Rab GGTase dimer (RGGT) interacts with CHM (component A) prior to Rab protein binding; the association is stabilized by geranylgeranyl pyrophosphate (GGpp). The CHM:RGGT:Rab complex is destabilized by GGpp. Interacts with non-phosphorylated form of RAB8A; phosphorylation of RAB8A at 'Thr-72' disrupts this interaction.

The enzyme catalyses geranylgeranyl diphosphate + L-cysteinyl-[protein] = S-geranylgeranyl-L-cysteinyl-[protein] + diphosphate. With respect to regulation, the enzymatic reaction requires the aid of a Rab escort protein (also called component A), such as CHM. Functionally, catalyzes the transfer of a geranylgeranyl moiety from geranylgeranyl diphosphate to both cysteines of Rab proteins with the C-terminal sequence -XXCC, -XCXC and -CCXX, such as RAB1A, RAB3A, RAB5A and RAB7A. The chain is Geranylgeranyl transferase type-2 subunit alpha (Rabggta) from Mus musculus (Mouse).